Here is a 426-residue protein sequence, read N- to C-terminus: 3-isopropylmalate dehydratase large subunit (426 aa).

[4Fe-4S] cluster-binding residues include cysteine 307, cysteine 367, and cysteine 370.

This sequence belongs to the aconitase/IPM isomerase family. LeuC type 2 subfamily. Heterodimer of LeuC and LeuD. [4Fe-4S] cluster serves as cofactor.

It carries out the reaction (2R,3S)-3-isopropylmalate = (2S)-2-isopropylmalate. It functions in the pathway amino-acid biosynthesis; L-leucine biosynthesis; L-leucine from 3-methyl-2-oxobutanoate: step 2/4. In terms of biological role, catalyzes the isomerization between 2-isopropylmalate and 3-isopropylmalate, via the formation of 2-isopropylmaleate. The protein is 3-isopropylmalate dehydratase large subunit of Aliarcobacter butzleri (strain RM4018) (Arcobacter butzleri).